A 379-amino-acid chain; its full sequence is Putative F-box protein At2g33190 (379 aa).

In terms of domain architecture, F-box spans 6–53; it reads NGWSKLYPDLLRSIFESLSCLDFHRAGTVCSNWYAVSRSCPLYPWRIV.

The protein is Putative F-box protein At2g33190 of Arabidopsis thaliana (Mouse-ear cress).